The sequence spans 984 residues: Respiratory nitrate reductase subunit alpha (984 aa).

The disordered stretch occupies residues 1–43; the sequence is MSRNDASQLDDGETTAESPPDDQANDAPEVGDPPGDPVDADSG. The span at 8-24 shows a compositional bias: acidic residues; the sequence is QLDDGETTAESPPDDQA. Positions 103–167 constitute a 4Fe-4S Mo/W bis-MGD-type domain; that stretch reads DSVSRSTHSV…CYTDYVNADQ (65 aa). Positions 110, 114, 118, and 153 each coordinate [4Fe-4S] cluster. Asp249 provides a ligand contact to Mo-bis(molybdopterin guanine dinucleotide).

This sequence belongs to the prokaryotic molybdopterin-containing oxidoreductase family. In terms of assembly, probable multiprotein complex; a catalytic heterodimer of an alpha and beta chain is proposed to associate with additional subunits involved in membrane attachment and electron transfer. Requires [4Fe-4S] cluster as cofactor. Mo-bis(molybdopterin guanine dinucleotide) serves as cofactor. In terms of processing, exported by the Tat system.

It localises to the cell membrane. It carries out the reaction nitrate + a quinol = a quinone + nitrite + H2O. Inhibited by cyanide, azide and antimycin A. Enzyme stability is not dependent on salt concentration. Functionally, the respiratory membrane-bound nitrate reductase enzyme complex plays a role in generation of metabolic energy by using nitrate as a terminal electron acceptor during anaerobic conditions. The alpha chain is the actual site of nitrate reduction. This is Respiratory nitrate reductase subunit alpha (narG) from Haloferax mediterranei (strain ATCC 33500 / DSM 1411 / JCM 8866 / NBRC 14739 / NCIMB 2177 / R-4) (Halobacterium mediterranei).